A 323-amino-acid chain; its full sequence is Oligodendrocyte transcription factor 2 (323 aa).

Polar residues-rich tracts occupy residues Met1–Ser13 and Lys27–Ser45. The disordered stretch occupies residues Met1–Gln107. Residues Lys76–Ser93 are compositionally biased toward low complexity. The region spanning Gln108–Leu162 is the bHLH domain.

Interacts with NKX2-2. Interacts with ZNF488. In terms of tissue distribution, expressed in the brain, in oligodendrocytes. Strongly expressed in oligodendrogliomas, while expression is weak to moderate in astrocytomas. Expression in glioblastomas highly variable.

The protein resides in the nucleus. It localises to the cytoplasm. Functionally, required for oligodendrocyte and motor neuron specification in the spinal cord, as well as for the development of somatic motor neurons in the hindbrain. Functions together with ZNF488 to promote oligodendrocyte differentiation. Cooperates with OLIG1 to establish the pMN domain of the embryonic neural tube. Antagonist of V2 interneuron and of NKX2-2-induced V3 interneuron development. The polypeptide is Oligodendrocyte transcription factor 2 (OLIG2) (Homo sapiens (Human)).